A 128-amino-acid chain; its full sequence is Putative lipid-binding protein At4g00165 (128 aa).

A signal peptide spans 1–23 (MGISKALRSLLILLLLNITFFFG). Intrachain disulfides connect Cys-34/Cys-90, Cys-46/Cys-76, Cys-56/Cys-75, and Cys-92/Cys-128.

This sequence belongs to the plant LTP family. PEARLI1 subfamily.

It localises to the secreted. The chain is Putative lipid-binding protein At4g00165 from Arabidopsis thaliana (Mouse-ear cress).